Reading from the N-terminus, the 210-residue chain is HTH-type transcriptional repressor FabR (210 aa).

The region spanning 10 to 70 (KTRRSLVEAA…TMVDESGLML (61 aa)) is the HTH tetR-type domain. Residues 33-52 (SLREVAREAGIAPTSFYRHF) constitute a DNA-binding region (H-T-H motif).

Homodimer.

It is found in the cytoplasm. In terms of biological role, represses the transcription of fabB, involved in unsaturated fatty acid (UFA) biosynthesis. By controlling UFA production, FabR directly influences the physical properties of the membrane bilayer. In Salmonella arizonae (strain ATCC BAA-731 / CDC346-86 / RSK2980), this protein is HTH-type transcriptional repressor FabR.